A 189-amino-acid polypeptide reads, in one-letter code: Adenylate kinase (189 aa).

Residue 10–15 (AAGKGT) participates in ATP binding. The interval 30–59 (STGDMLRAARASGSELGQRVAKIMDEGGLV) is NMP. Residues threonine 31, arginine 36, 57–59 (GLV), 85–88 (GFPR), and glutamine 92 contribute to the AMP site. The tract at residues 126–136 (KRFEEQGRADD) is LID. Position 127 (arginine 127) interacts with ATP. AMP-binding residues include arginine 133 and arginine 144. Residue glycine 172 participates in ATP binding.

It belongs to the adenylate kinase family. In terms of assembly, monomer.

The protein resides in the cytoplasm. It catalyses the reaction AMP + ATP = 2 ADP. It participates in purine metabolism; AMP biosynthesis via salvage pathway; AMP from ADP: step 1/1. Catalyzes the reversible transfer of the terminal phosphate group between ATP and AMP. Plays an important role in cellular energy homeostasis and in adenine nucleotide metabolism. This chain is Adenylate kinase, found in Hyphomonas neptunium (strain ATCC 15444).